Reading from the N-terminus, the 291-residue chain is MRYWGKLLGLALGIVSSTGIWGMIMGLLMGHWIDRARASRRRDYFSAQSTRQSLFFLTTFQAMGHLTKSKGRVTEADINIATKMMDRLELFGDARAAAQRAFREGKAGQFPLRIKLRKLRDACLGRFDLIKMFLEIQLQVAFVDGVLHPNERRVLYVIADELGVTREQFEFFLRNMESPTGQQSRQNQSRQNGKSQQRRNNGYSNGHSYGGQRPPSPLRGPTVESACRTLGVRSSDDAVTIKRAYRKLMSEHHPDKLVAKKLSPRMMEMAKRKAQDIQAAYELLKSANQTK.

The Periplasmic portion of the chain corresponds to 1 to 6; the sequence is MRYWGK. Residues 7–31 form a helical membrane-spanning segment; that stretch reads LLGLALGIVSSTGIWGMIMGLLMGH. At 32-291 the chain is on the cytoplasmic side; that stretch reads WIDRARASRR…ELLKSANQTK (260 aa). A disordered region spans residues 177–223; the sequence is ESPTGQQSRQNQSRQNGKSQQRRNNGYSNGHSYGGQRPPSPLRGPTV. Positions 181 to 211 are enriched in low complexity; the sequence is GQQSRQNQSRQNGKSQQRRNNGYSNGHSYGG. In terms of domain architecture, J spans 225 to 291; sequence SACRTLGVRS…ELLKSANQTK (67 aa).

As to quaternary structure, homodimer.

The protein resides in the cell inner membrane. Regulatory DnaK co-chaperone. Direct interaction between DnaK and DjlA is needed for the induction of the wcaABCDE operon, involved in the synthesis of a colanic acid polysaccharide capsule, possibly through activation of the RcsB/RcsC phosphotransfer signaling pathway. The colanic acid capsule may help the bacterium survive conditions outside the host. The sequence is that of Co-chaperone protein DjlA from Pectobacterium atrosepticum (strain SCRI 1043 / ATCC BAA-672) (Erwinia carotovora subsp. atroseptica).